The sequence spans 537 residues: Nedd4 binding protein 3 (537 aa).

S172 bears the Phosphoserine mark. Disordered stretches follow at residues 173 to 234 (LDEG…VLSC), 327 to 359 (RKELRAQQGLAPEPRTSGPPMEADPNARPEEEA), and 422 to 456 (LQEQAPREEAPGSCETDDCKSRGLLGEAGGNEARE). Positions 178-207 (PEPSLSDSSSGGSFGRSPGTGPSPFSSSLG) are enriched in low complexity. The stretch at 295–523 (VDRLHEVAQK…LEQELRVLRE (229 aa)) forms a coiled coil.

It belongs to the N4BP3 family. Binds NEDD4. Interacts with 14-3-3 proteins. Interacts with MAVS.

It is found in the cytoplasmic vesicle. It localises to the cell projection. Its subcellular location is the axon. The protein resides in the dendrite. In terms of biological role, plays a positive role in the antiviral innate immune signaling pathway. Mechanistically, interacts with MAVS and functions as a positive regulator to promote 'Lys-63'-linked polyubiquitination of MAVS and thus strengthens the interaction between MAVS and TRAF2. Also plays a role in axon and dendrite arborization during cranial nerve development. May also be important for neural crest migration and early development of other anterior structures including eye, brain and cranial cartilage. The sequence is that of Nedd4 binding protein 3 from Rattus norvegicus (Rat).